Here is a 196-residue protein sequence, read N- to C-terminus: Carnitine operon protein CaiE (196 aa).

A disordered region spans residues 174–196 (QPLRQMEENRPRLQGTTDVTPKR). Residues 187–196 (QGTTDVTPKR) are compositionally biased toward polar residues.

The protein belongs to the transferase hexapeptide repeat family.

Its pathway is amine and polyamine metabolism; carnitine metabolism. Overproduction of CaiE stimulates the activity of CaiB and CaiD. This Escherichia coli (strain K12) protein is Carnitine operon protein CaiE (caiE).